A 384-amino-acid chain; its full sequence is Outer membrane protein assembly factor BamB (384 aa).

Residues 1–21 (MKLTLKRKFIAVLALTSLLGA) form the signal peptide. Cys22 carries the N-palmitoyl cysteine lipid modification. Cys22 is lipidated: S-diacylglycerol cysteine.

It belongs to the BamB family. As to quaternary structure, part of the Bam complex.

The protein resides in the cell outer membrane. Its function is as follows. Part of the outer membrane protein assembly complex, which is involved in assembly and insertion of beta-barrel proteins into the outer membrane. The polypeptide is Outer membrane protein assembly factor BamB (Taylorella asinigenitalis (strain MCE3)).